Reading from the N-terminus, the 351-residue chain is Methionine import ATP-binding protein MetN (351 aa).

Residues 4–249 (VQLDHVSVTF…PKAELTQKFV (246 aa)) form the ABC transporter domain. An ATP-binding site is contributed by 41 to 48 (GFSGAGKS).

Belongs to the ABC transporter superfamily. Methionine importer (TC 3.A.1.24) family. The complex is composed of two ATP-binding proteins (MetN), two transmembrane proteins (MetI) and a solute-binding protein (MetQ).

The protein resides in the cell membrane. The catalysed reaction is L-methionine(out) + ATP + H2O = L-methionine(in) + ADP + phosphate + H(+). The enzyme catalyses D-methionine(out) + ATP + H2O = D-methionine(in) + ADP + phosphate + H(+). In terms of biological role, part of the ABC transporter complex MetNIQ involved in methionine import. Responsible for energy coupling to the transport system. The sequence is that of Methionine import ATP-binding protein MetN from Lactobacillus delbrueckii subsp. bulgaricus (strain ATCC 11842 / DSM 20081 / BCRC 10696 / JCM 1002 / NBRC 13953 / NCIMB 11778 / NCTC 12712 / WDCM 00102 / Lb 14).